The primary structure comprises 562 residues: Serine/threonine-protein kinase STN7, chloroplastic (562 aa).

The N-terminal 45 residues, 1–45 (MATISPGGAYIGTPSPFLGKKLKPFSLTSPILSFKPTVKLNSSCR), are a transit peptide targeting the chloroplast. A Protein kinase domain is found at 134–452 (FVVGKKLGEG…AKAALAHPYF (319 aa)). ATP is bound by residues 140–148 (LGEGSFGVV) and lysine 167. Residue aspartate 279 is the Proton acceptor of the active site. Serine 526 is modified (phosphoserine). Phosphothreonine occurs at positions 537 and 541.

The protein belongs to the protein kinase superfamily. Ser/Thr protein kinase family. Phosphorylated.

The protein resides in the plastid. The protein localises to the chloroplast thylakoid membrane. It catalyses the reaction L-seryl-[protein] + ATP = O-phospho-L-seryl-[protein] + ADP + H(+). It carries out the reaction L-threonyl-[protein] + ATP = O-phospho-L-threonyl-[protein] + ADP + H(+). In terms of biological role, serine/threonine protein kinase required for state transition by phosphorylating light-harvesting complex II outer antennae (LCHII). State transition plays a central role in response to environmental changes and allows to adjust to changing light conditions via the redistribution of light excitation energy between photosystem II (PSII) and photosystem I (PSI). Phosphorylates the minor light harvesting protein LHCB4.2/CP29 and is involved in the light-dependent phosphorylation of TSP9. Acts as a key component of the long-term response (LTR) signaling pathway. Mediates phosphorylation-dependent PTAC16 subcellular localization to regulate plastid gene expression. This is Serine/threonine-protein kinase STN7, chloroplastic (STN7) from Arabidopsis thaliana (Mouse-ear cress).